A 409-amino-acid polypeptide reads, in one-letter code: uncharacterized protein (409 aa).

Positions H36–R50 are enriched in basic and acidic residues. Disordered regions lie at residues H36–S67, I239–I298, and R338–R373. Positions P51–S67 are enriched in low complexity. Residues V245 to P265 show a composition bias toward basic and acidic residues. Over residues L268–K281 the composition is skewed to polar residues. Composition is skewed to basic and acidic residues over residues N282–D294 and R338–R350.

This is an uncharacterized protein from Homo sapiens (Human).